Consider the following 225-residue polypeptide: Ribonuclease T (225 aa).

The interval methionine 1–histidine 21 is disordered. Positions valine 33–phenylalanine 207 constitute an Exonuclease domain. Mg(2+) contacts are provided by aspartate 36, glutamate 38, histidine 194, and aspartate 199. Residue histidine 194 is the Proton donor/acceptor of the active site.

This sequence belongs to the RNase T family. In terms of assembly, homodimer. Requires Mg(2+) as cofactor.

Trims short 3' overhangs of a variety of RNA species, leaving a one or two nucleotide 3' overhang. Responsible for the end-turnover of tRNA: specifically removes the terminal AMP residue from uncharged tRNA (tRNA-C-C-A). Also appears to be involved in tRNA biosynthesis. This is Ribonuclease T from Pseudomonas savastanoi pv. phaseolicola (strain 1448A / Race 6) (Pseudomonas syringae pv. phaseolicola (strain 1448A / Race 6)).